A 458-amino-acid polypeptide reads, in one-letter code: GTPase Der (458 aa).

EngA-type G domains follow at residues 4–169 and 178–353; these read PSIA…PKDF and VMMS…TQHR. Residues 10 to 17, 57 to 61, 120 to 123, 184 to 191, 231 to 235, and 296 to 299 contribute to the GTP site; these read GRPNVGKS, DTGGL, NKCE, DTAGI, and NKWD. Residues 354 to 439 enclose the KH-like domain; it reads MRVTTSVVNE…PIILLWRGKQ (86 aa).

This sequence belongs to the TRAFAC class TrmE-Era-EngA-EngB-Septin-like GTPase superfamily. EngA (Der) GTPase family. Associates with the 50S ribosomal subunit.

In terms of biological role, GTPase that plays an essential role in the late steps of ribosome biogenesis. The sequence is that of GTPase Der from Prochlorococcus marinus (strain MIT 9515).